The primary structure comprises 126 residues: Basic phospholipase A2 1 (126 aa).

Positions 1 to 7 (SNRPMPL) are excised as a propeptide. Disulfide bonds link C18/C78, C33/C125, C35/C51, C50/C106, C57/C99, C67/C92, and C85/C97. Ca(2+)-binding residues include Y34, G36, and G38. The active site involves H54. A Ca(2+)-binding site is contributed by D55. D100 is a catalytic residue.

This sequence belongs to the phospholipase A2 family. Group I subfamily. D49 sub-subfamily. In terms of assembly, heterodimer formed between two homologous isoforms: isoform 1 and isoform 2. Ca(2+) is required as a cofactor. As to expression, expressed by the venom gland.

It is found in the secreted. The enzyme catalyses a 1,2-diacyl-sn-glycero-3-phosphocholine + H2O = a 1-acyl-sn-glycero-3-phosphocholine + a fatty acid + H(+). Its function is as follows. PLA2 catalyzes the calcium-dependent hydrolysis of the 2-acyl groups in 3-sn-phosphoglycerides. This is Basic phospholipase A2 1 from Naja sagittifera (Andaman cobra).